The primary structure comprises 219 residues: Virginiamycin A acetyltransferase (219 aa).

The active site involves His-87.

This sequence belongs to the transferase hexapeptide repeat family.

Inactivates the A compounds of virginiamycin-like antibiotics, thus providing resistance to these antibiotics. The chain is Virginiamycin A acetyltransferase (vat) from Staphylococcus aureus.